A 2539-amino-acid polypeptide reads, in one-letter code: Zinc finger FYVE domain-containing protein 26 (2539 aa).

Phosphoserine is present on residues Ser297, Ser615, Ser619, and Ser703. 3 disordered regions span residues 594 to 637 (HLPE…SLGV), 699 to 724 (ISSR…GLQS), and 738 to 806 (WRHK…SLSA). Over residues 764–774 (PSLRRGRRTRR) the composition is skewed to basic residues. Low complexity predominate over residues 787 to 805 (SLESTSSELSTSTSEGSLS). At Ser800 the chain carries Phosphoserine. Residues 868–895 (MFMERYQEVIQELAQVEHKIENQNSDAG) adopt a coiled-coil conformation. A disordered region spans residues 1267–1296 (DLPLSTPSSPRTTENPTLERKPYSSPRDSS). The span at 1271 to 1282 (STPSSPRTTENP) shows a compositional bias: polar residues. 4 positions are modified to phosphoserine: Ser1742, Ser1764, Ser1780, and Ser1782. Residues 1754 to 1808 (ADPETLPRSPSAEFSPAAPPGISSIHSPSLRERSFPPTQPSQEFVPPATPPARHQ) are disordered. A compositionally biased stretch (low complexity) spans 1760–1769 (PRSPSAEFSP). The FYVE-type zinc finger occupies 1812–1872 (DETESICMVC…VCDQCYSYCN (61 aa)). Zn(2+) is bound by residues Cys1818, Cys1821, Cys1835, Cys1838, Cys1843, Cys1846, Cys1864, and Cys1867.

In terms of assembly, interacts with AP5Z1, AP5B1, AP5S1 and SPG11. Interacts with TTC19 and KIF13A. Strongest expression in the adrenal gland, bone marrow, adult brain, fetal brain, lung, placenta, prostate, skeletal muscle, testis, thymus, and retina. Intermediate levels are detected in other structures, including the spinal cord.

It localises to the cytoplasm. Its subcellular location is the cytoskeleton. The protein localises to the microtubule organizing center. It is found in the centrosome. The protein resides in the midbody. Phosphatidylinositol 3-phosphate-binding protein required for the abscission step in cytokinesis: recruited to the midbody during cytokinesis and acts as a regulator of abscission. May also be required for efficient homologous recombination DNA double-strand break repair. The polypeptide is Zinc finger FYVE domain-containing protein 26 (ZFYVE26) (Homo sapiens (Human)).